Consider the following 159-residue polypeptide: Elicitor-responsive protein 1 (159 aa).

The 112-residue stretch at 1–112 (MAGSGVLEVH…SLGMEHGTWE (112 aa)) folds into the C2 domain. Ca(2+)-binding residues include Asp-21 and Asp-30. Ser-44 is subject to Phosphoserine; by CPK. Residues Asp-81, Asp-83, Ser-86, and Asp-89 each contribute to the Ca(2+) site.

Ca(2+) serves as cofactor. In terms of processing, phosphorylated at Ser-44 by CPK18 in a calcium-dependent manner. As to expression, isoform 2 is expressed in young vascular tissues and tiller buds.

The protein localises to the cytoplasm. The protein resides in the cell membrane. In terms of biological role, may play a role in plant defense signaling. Isoform 2 binds to phospholipids in a Ca(2+)-dependent manner in response to pathogen elicitors. This chain is Elicitor-responsive protein 1 (ERG1), found in Oryza sativa subsp. japonica (Rice).